A 408-amino-acid polypeptide reads, in one-letter code: GTPase HflX (408 aa).

In terms of domain architecture, Hflx-type G spans 198 to 361 (PRVSLVGYTN…LIVREMERHY (164 aa)). Residues 204 to 211 (GYTNAGKS), 229 to 233 (FVTLD), 251 to 254 (DTVG), 317 to 320 (NKAD), and 339 to 341 (SAK) contribute to the GTP site. Mg(2+) contacts are provided by serine 211 and threonine 231.

It belongs to the TRAFAC class OBG-HflX-like GTPase superfamily. HflX GTPase family. As to quaternary structure, monomer. Associates with the 50S ribosomal subunit. It depends on Mg(2+) as a cofactor.

It is found in the cytoplasm. Functionally, GTPase that associates with the 50S ribosomal subunit and may have a role during protein synthesis or ribosome biogenesis. The chain is GTPase HflX from Spirochaeta thermophila (strain ATCC 49972 / DSM 6192 / RI 19.B1).